A 52-amino-acid polypeptide reads, in one-letter code: Insulin-2 (52 aa).

Cystine bridges form between C7–C38, C19–C51, and C37–C42.

The protein belongs to the insulin family. Heterodimer of a B chain and an A chain linked by two disulfide bonds.

It localises to the secreted. Functionally, insulin decreases blood glucose concentration. It increases cell permeability to monosaccharides, amino acids and fatty acids. It accelerates glycolysis, the pentose phosphate cycle, and glycogen synthesis in liver. In Huso dauricus (Kaluga sturgeon), this protein is Insulin-2.